A 264-amino-acid polypeptide reads, in one-letter code: MKAYLDLMRHVLDNGTDKSDRTGTGTRSVFGYQMRFDLGKGFPLLTTKKLHLRSIIHELLWFLKGDTNIKYLKDNNVSIWDEWADENGDLGPVYGYQWRNWPAPDGRHIDQIANVVEQIKKNPDSRRLIVSAWNPALVDEMALPPCHALFQFYVADGKLSCQLYQRSADIFLGVPFNIASYALLTMMMAQVCGLEAGEFVHTFGDAHLYRNHFEQAALQLEREPRALPVMKINPEVKDLFSFKFEDFELEGYDPHPHIKAAVSV.

Residue R21 coordinates dUMP. (6R)-5,10-methylene-5,6,7,8-tetrahydrofolate is bound at residue H51. R126 to R127 contributes to the dUMP binding site. Residue C146 is the Nucleophile of the active site. DUMP is bound by residues R166–D169, N177, and H207–Y209. D169 is a binding site for (6R)-5,10-methylene-5,6,7,8-tetrahydrofolate. Position 263 (S263) interacts with (6R)-5,10-methylene-5,6,7,8-tetrahydrofolate.

This sequence belongs to the thymidylate synthase family. Bacterial-type ThyA subfamily. Homodimer.

The protein resides in the cytoplasm. It catalyses the reaction dUMP + (6R)-5,10-methylene-5,6,7,8-tetrahydrofolate = 7,8-dihydrofolate + dTMP. The protein operates within pyrimidine metabolism; dTTP biosynthesis. Its function is as follows. Catalyzes the reductive methylation of 2'-deoxyuridine-5'-monophosphate (dUMP) to 2'-deoxythymidine-5'-monophosphate (dTMP) while utilizing 5,10-methylenetetrahydrofolate (mTHF) as the methyl donor and reductant in the reaction, yielding dihydrofolate (DHF) as a by-product. This enzymatic reaction provides an intracellular de novo source of dTMP, an essential precursor for DNA biosynthesis. This chain is Thymidylate synthase, found in Neisseria meningitidis serogroup C / serotype 2a (strain ATCC 700532 / DSM 15464 / FAM18).